Here is a 132-residue protein sequence, read N- to C-terminus: Ribonuclease P protein component (132 aa).

This sequence belongs to the RnpA family. In terms of assembly, consists of a catalytic RNA component (M1 or rnpB) and a protein subunit.

It catalyses the reaction Endonucleolytic cleavage of RNA, removing 5'-extranucleotides from tRNA precursor.. RNaseP catalyzes the removal of the 5'-leader sequence from pre-tRNA to produce the mature 5'-terminus. It can also cleave other RNA substrates such as 4.5S RNA. The protein component plays an auxiliary but essential role in vivo by binding to the 5'-leader sequence and broadening the substrate specificity of the ribozyme. The sequence is that of Ribonuclease P protein component from Micrococcus luteus (strain ATCC 4698 / DSM 20030 / JCM 1464 / CCM 169 / CCUG 5858 / IAM 1056 / NBRC 3333 / NCIMB 9278 / NCTC 2665 / VKM Ac-2230) (Micrococcus lysodeikticus).